Consider the following 362-residue polypeptide: Chorismate synthase (362 aa).

The NADP(+) site is built by R48 and R54. Residues 125 to 127 (RSS), 237 to 238 (NA), G277, 292 to 296 (KPTSS), and R318 contribute to the FMN site.

It belongs to the chorismate synthase family. In terms of assembly, homotetramer. FMNH2 serves as cofactor.

It catalyses the reaction 5-O-(1-carboxyvinyl)-3-phosphoshikimate = chorismate + phosphate. It functions in the pathway metabolic intermediate biosynthesis; chorismate biosynthesis; chorismate from D-erythrose 4-phosphate and phosphoenolpyruvate: step 7/7. Catalyzes the anti-1,4-elimination of the C-3 phosphate and the C-6 proR hydrogen from 5-enolpyruvylshikimate-3-phosphate (EPSP) to yield chorismate, which is the branch point compound that serves as the starting substrate for the three terminal pathways of aromatic amino acid biosynthesis. This reaction introduces a second double bond into the aromatic ring system. The polypeptide is Chorismate synthase (Idiomarina loihiensis (strain ATCC BAA-735 / DSM 15497 / L2-TR)).